We begin with the raw amino-acid sequence, 134 residues long: Protein NrdI (134 aa).

Belongs to the NrdI family.

In terms of biological role, probably involved in ribonucleotide reductase function. In Rhizobium leguminosarum bv. trifolii (strain WSM2304), this protein is Protein NrdI.